Consider the following 355-residue polypeptide: Uroporphyrinogen decarboxylase (355 aa).

Substrate is bound by residues 27–31, Asp77, Tyr154, Thr209, and His327; that span reads RQAGR.

It belongs to the uroporphyrinogen decarboxylase family. Homodimer.

The protein resides in the cytoplasm. It catalyses the reaction uroporphyrinogen III + 4 H(+) = coproporphyrinogen III + 4 CO2. The protein operates within porphyrin-containing compound metabolism; protoporphyrin-IX biosynthesis; coproporphyrinogen-III from 5-aminolevulinate: step 4/4. Its function is as follows. Catalyzes the decarboxylation of four acetate groups of uroporphyrinogen-III to yield coproporphyrinogen-III. The protein is Uroporphyrinogen decarboxylase of Aeromonas salmonicida (strain A449).